An 874-amino-acid polypeptide reads, in one-letter code: Alanine--tRNA ligase (874 aa).

The Zn(2+) site is built by His-562, His-566, Cys-664, and His-668.

The protein belongs to the class-II aminoacyl-tRNA synthetase family. Requires Zn(2+) as cofactor.

Its subcellular location is the cytoplasm. The enzyme catalyses tRNA(Ala) + L-alanine + ATP = L-alanyl-tRNA(Ala) + AMP + diphosphate. Its function is as follows. Catalyzes the attachment of alanine to tRNA(Ala) in a two-step reaction: alanine is first activated by ATP to form Ala-AMP and then transferred to the acceptor end of tRNA(Ala). Also edits incorrectly charged Ser-tRNA(Ala) and Gly-tRNA(Ala) via its editing domain. In Shewanella putrefaciens (strain CN-32 / ATCC BAA-453), this protein is Alanine--tRNA ligase.